The sequence spans 373 residues: Nuclear migration protein JNM1 (373 aa).

The disordered stretch occupies residues 33-53 (EVKEDGQQEEQEEASSRKDGL). The residue at position 91 (S91) is a Phosphoserine. 3 coiled-coil regions span residues 114 to 139 (KIEN…LATE), 200 to 245 (EDRK…EFEN), and 331 to 367 (WLKA…EDEA).

Component of the dynactin complex composed of at least ARP1, JNM1, NIP100 and ARP10. Dynactin comprises a short rod of ARP1 polymers attached to ARP10 at its pointed-end and probably associated with the capping protein at its barbed-end. The rod structure is implicated in dynein cargo binding. A sidearm formed by NIP100 projects from the ARP1 filament and is implicated in motor binding. Interacts with ARP1.

The protein resides in the cytoplasm. It is found in the cytoskeleton. Its function is as follows. Component of the dynactin complex which assists cytoplasmic dynein by increasing its processivity and by regulation of its cargo binding. The dynactin complex is required for the spindle translocation late in anaphase and is involved in a cell wall synthesis checkpoint. JNM1 is associated with the rod and links it to the projecting sidearm. Required for proper nuclear migration during the mitotic cell cycle and for astral microtubule development. The sequence is that of Nuclear migration protein JNM1 (JNM1) from Saccharomyces cerevisiae (strain ATCC 204508 / S288c) (Baker's yeast).